We begin with the raw amino-acid sequence, 313 residues long: Tyrosine recombinase XerC (313 aa).

The 85-residue stretch at 1 to 85 (MNDQVEAFLR…AVKSFFAFLT (85 aa)) folds into the Core-binding (CB) domain. Residues 106–291 (DLPRALTPHQ…NHASSAQPVR (186 aa)) enclose the Tyr recombinase domain. Active-site residues include R147, K171, H243, R246, and H269. Y278 (O-(3'-phospho-DNA)-tyrosine intermediate) is an active-site residue.

This sequence belongs to the 'phage' integrase family. XerC subfamily. In terms of assembly, forms a cyclic heterotetrameric complex composed of two molecules of XerC and two molecules of XerD.

Its subcellular location is the cytoplasm. Site-specific tyrosine recombinase, which acts by catalyzing the cutting and rejoining of the recombining DNA molecules. The XerC-XerD complex is essential to convert dimers of the bacterial chromosome into monomers to permit their segregation at cell division. It also contributes to the segregational stability of plasmids. This Roseiflexus sp. (strain RS-1) protein is Tyrosine recombinase XerC.